A 739-amino-acid chain; its full sequence is Gamma-tubulin complex component 4 homolog (739 aa).

Belongs to the TUBGCP family.

It localises to the cytoplasm. Its subcellular location is the cytoskeleton. It is found in the microtubule organizing center. Its function is as follows. Gamma-tubulin complex is necessary for microtubule nucleation at the microtubule organizing centers (MTOCs). This Medicago truncatula (Barrel medic) protein is Gamma-tubulin complex component 4 homolog (85P).